Reading from the N-terminus, the 315-residue chain is Aspartate carbamoyltransferase catalytic subunit (315 aa).

Carbamoyl phosphate contacts are provided by Arg65 and Thr66. Residue Lys93 participates in L-aspartate binding. Carbamoyl phosphate-binding residues include Arg115, His145, and Gln148. L-aspartate is bound by residues Arg179 and Arg234. 2 residues coordinate carbamoyl phosphate: Gly275 and Pro276.

This sequence belongs to the aspartate/ornithine carbamoyltransferase superfamily. ATCase family. In terms of assembly, heterododecamer (2C3:3R2) of six catalytic PyrB chains organized as two trimers (C3), and six regulatory PyrI chains organized as three dimers (R2).

It carries out the reaction carbamoyl phosphate + L-aspartate = N-carbamoyl-L-aspartate + phosphate + H(+). It participates in pyrimidine metabolism; UMP biosynthesis via de novo pathway; (S)-dihydroorotate from bicarbonate: step 2/3. Its function is as follows. Catalyzes the condensation of carbamoyl phosphate and aspartate to form carbamoyl aspartate and inorganic phosphate, the committed step in the de novo pyrimidine nucleotide biosynthesis pathway. The sequence is that of Aspartate carbamoyltransferase catalytic subunit from Xanthomonas axonopodis pv. citri (strain 306).